The chain runs to 100 residues: Small ribosomal subunit protein uS14c (100 aa).

A disordered region spans residues Met1–Ile31.

The protein belongs to the universal ribosomal protein uS14 family. In terms of assembly, part of the 30S ribosomal subunit.

The protein resides in the plastid. The protein localises to the chloroplast. In terms of biological role, binds 16S rRNA, required for the assembly of 30S particles. This is Small ribosomal subunit protein uS14c from Atropa belladonna (Belladonna).